Consider the following 146-residue polypeptide: Hemoglobin subunit beta (146 aa).

One can recognise a Globin domain in the interval 2–146; it reads FLTAEEKGLV…VANALAHKYH (145 aa). Position 44 is a phosphoserine (serine 44). Lysine 59 is modified (N6-acetyllysine). Histidine 63 contributes to the heme b binding site. N6-acetyllysine is present on lysine 82. Histidine 92 is a heme b binding site. The residue at position 93 (cysteine 93) is an S-nitrosocysteine. N6-acetyllysine is present on lysine 144.

The protein belongs to the globin family. In terms of assembly, heterotetramer of two alpha chains and two beta chains. In terms of tissue distribution, red blood cells.

Functionally, involved in oxygen transport from the lung to the various peripheral tissues. This Lynx lynx (Eurasian lynx) protein is Hemoglobin subunit beta (HBB).